A 137-amino-acid polypeptide reads, in one-letter code: MTYHLDVVSAEKKMFSGVVQKIQVTGSEGELGIFPGHAPLLTAIKPGMIRIVKQFGEEEFIYLSGGILEVQPSVVIVLADTAIRGLDLDEARALESKRKAEAHINNSHGDVDYAQASAELAKAIAKLRVIELTKKAM.

This sequence belongs to the ATPase epsilon chain family. As to quaternary structure, F-type ATPases have 2 components, CF(1) - the catalytic core - and CF(0) - the membrane proton channel. CF(1) has five subunits: alpha(3), beta(3), gamma(1), delta(1), epsilon(1). CF(0) has three main subunits: a, b and c.

The protein localises to the cell inner membrane. Functionally, produces ATP from ADP in the presence of a proton gradient across the membrane. The sequence is that of ATP synthase epsilon chain from Yersinia pestis bv. Antiqua (strain Antiqua).